A 121-amino-acid polypeptide reads, in one-letter code: Basic phospholipase A2 homolog AppP2 (121 aa).

Cystine bridges form between Cys26–Cys115, Cys28–Cys44, Cys43–Cys95, Cys49–Cys121, Cys50–Cys88, Cys57–Cys81, and Cys75–Cys86. Residues 105 to 117 are important for membrane-damaging activities in eukaryotes and bacteria; heparin-binding; it reads KKYKAYFKLKCKK.

It belongs to the phospholipase A2 family. Group II subfamily. K49 sub-subfamily. Monomer. In terms of tissue distribution, expressed by the venom gland.

It is found in the secreted. In terms of biological role, snake venom phospholipase A2 (PLA2) that lacks enzymatic activity. Displays edema-inducing activities. Is myotoxic. A model of myotoxic mechanism has been proposed: an apo Lys49-PLA2 is activated by the entrance of a hydrophobic molecule (e.g. fatty acid) at the hydrophobic channel of the protein leading to a reorientation of a monomer. This reorientation causes a transition between 'inactive' to 'active' states, causing alignment of C-terminal and membrane-docking sites (MDoS) side-by-side and putting the membrane-disruption sites (MDiS) in the same plane, exposed to solvent and in a symmetric position for both monomers. The MDoS region stabilizes the toxin on membrane by the interaction of charged residues with phospholipid head groups. Subsequently, the MDiS region destabilizes the membrane with penetration of hydrophobic residues. This insertion causes a disorganization of the membrane, allowing an uncontrolled influx of ions (i.e. calcium and sodium), and eventually triggering irreversible intracellular alterations and cell death. The sequence is that of Basic phospholipase A2 homolog AppP2 from Agkistrodon piscivorus piscivorus (Eastern cottonmouth).